Consider the following 265-residue polypeptide: S-adenosylmethionine decarboxylase proenzyme (265 aa).

Serine 114 acts as the Schiff-base intermediate with substrate; via pyruvic acid in catalysis. At serine 114 the chain carries Pyruvic acid (Ser); by autocatalysis. Catalysis depends on histidine 119, which acts as the Proton acceptor; for processing activity. Cysteine 142 (proton donor; for catalytic activity) is an active-site residue.

This sequence belongs to the prokaryotic AdoMetDC family. Type 2 subfamily. In terms of assembly, heterooctamer of four alpha and four beta chains arranged as a tetramer of alpha/beta heterodimers. The cofactor is pyruvate. In terms of processing, is synthesized initially as an inactive proenzyme. Formation of the active enzyme involves a self-maturation process in which the active site pyruvoyl group is generated from an internal serine residue via an autocatalytic post-translational modification. Two non-identical subunits are generated from the proenzyme in this reaction, and the pyruvate is formed at the N-terminus of the alpha chain, which is derived from the carboxyl end of the proenzyme. The post-translation cleavage follows an unusual pathway, termed non-hydrolytic serinolysis, in which the side chain hydroxyl group of the serine supplies its oxygen atom to form the C-terminus of the beta chain, while the remainder of the serine residue undergoes an oxidative deamination to produce ammonia and the pyruvoyl group blocking the N-terminus of the alpha chain.

It carries out the reaction S-adenosyl-L-methionine + H(+) = S-adenosyl 3-(methylsulfanyl)propylamine + CO2. It functions in the pathway amine and polyamine biosynthesis; S-adenosylmethioninamine biosynthesis; S-adenosylmethioninamine from S-adenosyl-L-methionine: step 1/1. Catalyzes the decarboxylation of S-adenosylmethionine to S-adenosylmethioninamine (dcAdoMet), the propylamine donor required for the synthesis of the polyamines spermine and spermidine from the diamine putrescine. This is S-adenosylmethionine decarboxylase proenzyme from Buchnera aphidicola subsp. Acyrthosiphon pisum (strain APS) (Acyrthosiphon pisum symbiotic bacterium).